A 403-amino-acid chain; its full sequence is F-box protein At1g60400 (403 aa).

The F-box domain maps to 13 to 59 (IDRLSALPEHLLCRILSELSTKDSVRTSVLSKHWRNLWLHVPVLELE).

The sequence is that of F-box protein At1g60400 from Arabidopsis thaliana (Mouse-ear cress).